The following is a 213-amino-acid chain: Dephospho-CoA kinase (213 aa).

The region spanning 3–202 is the DPCK domain; it reads RIGLTGGIGS…QSYLALADKH (200 aa). Position 11-16 (11-16) interacts with ATP; that stretch reads GSGKTR.

This sequence belongs to the CoaE family.

It is found in the cytoplasm. The catalysed reaction is 3'-dephospho-CoA + ATP = ADP + CoA + H(+). The protein operates within cofactor biosynthesis; coenzyme A biosynthesis; CoA from (R)-pantothenate: step 5/5. Functionally, catalyzes the phosphorylation of the 3'-hydroxyl group of dephosphocoenzyme A to form coenzyme A. This Bordetella avium (strain 197N) protein is Dephospho-CoA kinase.